A 309-amino-acid chain; its full sequence is Homoserine kinase (309 aa).

91–101 (PIGSGLGSSAC) is a binding site for ATP.

The protein belongs to the GHMP kinase family. Homoserine kinase subfamily.

The protein resides in the cytoplasm. It catalyses the reaction L-homoserine + ATP = O-phospho-L-homoserine + ADP + H(+). Its pathway is amino-acid biosynthesis; L-threonine biosynthesis; L-threonine from L-aspartate: step 4/5. In terms of biological role, catalyzes the ATP-dependent phosphorylation of L-homoserine to L-homoserine phosphate. The protein is Homoserine kinase of Buchnera aphidicola subsp. Acyrthosiphon pisum (strain 5A).